A 303-amino-acid polypeptide reads, in one-letter code: Glycosyltransferase AglJ (303 aa).

A run of 2 helical transmembrane segments spans residues 230–250 (FYFGSVGFASTATGLGLALYV) and 263–283 (VIAVVSMAGILFGVQLLMFGV).

It belongs to the glycosyltransferase 2 family.

The protein resides in the cell membrane. The protein operates within cell surface structure biogenesis; S-layer biogenesis. In terms of biological role, involved in the assembly of a N-linked pentasaccharide that decorates the S-layer glycoprotein and flagellins. Adds the first hexose subunit of the pentasaccharide to the dolichol phosphate carrier. The chain is Glycosyltransferase AglJ (aglJ) from Haloferax volcanii (strain ATCC 29605 / DSM 3757 / JCM 8879 / NBRC 14742 / NCIMB 2012 / VKM B-1768 / DS2) (Halobacterium volcanii).